Reading from the N-terminus, the 211-residue chain is Protein-methionine-sulfoxide reductase heme-binding subunit MsrQ (211 aa).

4 helical membrane-spanning segments follow: residues 10-30 (WLKVCLHLAGLLPFLWLVWAI), 82-102 (LWCFAWATLHLTSYALLELGV), 116-136 (PYLTLGIISWIILLALAFTST), and 153-173 (FVYLVAILAPIHYLWSVKIIS).

It belongs to the MsrQ family. In terms of assembly, heterodimer of a catalytic subunit (MsrP) and a heme-binding subunit (MsrQ). Requires FMN as cofactor. The cofactor is heme b.

It localises to the cell inner membrane. Its function is as follows. Part of the MsrPQ system that repairs oxidized periplasmic proteins containing methionine sulfoxide residues (Met-O), using respiratory chain electrons. Thus protects these proteins from oxidative-stress damage caused by reactive species of oxygen and chlorine generated by the host defense mechanisms. MsrPQ is essential for the maintenance of envelope integrity under bleach stress, rescuing a wide series of structurally unrelated periplasmic proteins from methionine oxidation, including the primary periplasmic chaperone SurA and the lipoprotein Pal. MsrQ provides electrons for reduction to the reductase catalytic subunit MsrP, using the quinone pool of the respiratory chain. The chain is Protein-methionine-sulfoxide reductase heme-binding subunit MsrQ from Escherichia coli O157:H7.